Reading from the N-terminus, the 466-residue chain is Ribulose bisphosphate carboxylase large chain (466 aa).

K5 carries the N6,N6,N6-trimethyllysine modification. 2 residues coordinate substrate: N114 and T164. The Proton acceptor role is filled by K166. K168 provides a ligand contact to substrate. Positions 192, 194, and 195 each coordinate Mg(2+). K192 is subject to N6-carboxylysine. Catalysis depends on H285, which acts as the Proton acceptor. Substrate-binding residues include R286, H318, and S370.

It belongs to the RuBisCO large chain family. Type I subfamily. Heterohexadecamer of 8 large chains and 8 small chains; disulfide-linked. The disulfide link is formed within the large subunit homodimers. Mg(2+) serves as cofactor. The disulfide bond which can form in the large chain dimeric partners within the hexadecamer appears to be associated with oxidative stress and protein turnover.

It is found in the plastid. It localises to the chloroplast. It carries out the reaction 2 (2R)-3-phosphoglycerate + 2 H(+) = D-ribulose 1,5-bisphosphate + CO2 + H2O. The enzyme catalyses D-ribulose 1,5-bisphosphate + O2 = 2-phosphoglycolate + (2R)-3-phosphoglycerate + 2 H(+). In terms of biological role, ruBisCO catalyzes two reactions: the carboxylation of D-ribulose 1,5-bisphosphate, the primary event in carbon dioxide fixation, as well as the oxidative fragmentation of the pentose substrate in the photorespiration process. Both reactions occur simultaneously and in competition at the same active site. This is Ribulose bisphosphate carboxylase large chain from Drosera binata (Fork-leaved sundew).